Reading from the N-terminus, the 276-residue chain is Tryptophan synthase alpha chain (276 aa).

Catalysis depends on proton acceptor residues E49 and D60.

It belongs to the TrpA family. As to quaternary structure, tetramer of two alpha and two beta chains.

It catalyses the reaction (1S,2R)-1-C-(indol-3-yl)glycerol 3-phosphate + L-serine = D-glyceraldehyde 3-phosphate + L-tryptophan + H2O. The protein operates within amino-acid biosynthesis; L-tryptophan biosynthesis; L-tryptophan from chorismate: step 5/5. Functionally, the alpha subunit is responsible for the aldol cleavage of indoleglycerol phosphate to indole and glyceraldehyde 3-phosphate. The chain is Tryptophan synthase alpha chain from Corynebacterium aurimucosum (strain ATCC 700975 / DSM 44827 / CIP 107346 / CN-1) (Corynebacterium nigricans).